A 1046-amino-acid chain; its full sequence is DNA-directed RNA polymerase subunit beta' (1046 aa).

Mg(2+) contacts are provided by D383, D385, and D387. Zn(2+)-binding residues include C752, C826, C833, and C836.

The protein belongs to the RNA polymerase beta' chain family. As to quaternary structure, the RNAP catalytic core consists of 2 alpha, 1 beta, 1 beta' and 1 omega subunit. When a sigma factor is associated with the core the holoenzyme is formed, which can initiate transcription. Requires Mg(2+) as cofactor. It depends on Zn(2+) as a cofactor.

It catalyses the reaction RNA(n) + a ribonucleoside 5'-triphosphate = RNA(n+1) + diphosphate. Its function is as follows. DNA-dependent RNA polymerase catalyzes the transcription of DNA into RNA using the four ribonucleoside triphosphates as substrates. The protein is DNA-directed RNA polymerase subunit beta' of Weissella hellenica.